A 675-amino-acid polypeptide reads, in one-letter code: Secretogranin-1 (675 aa).

The signal sequence occupies residues 1 to 20; sequence MQRAMLLGLLGAAALAAVIS. Cysteines 36 and 57 form a disulfide. A compositionally biased stretch (basic and acidic residues) spans 64-90; it reads SGKEVKGEEKGENENSKFEVRLLRDPS. Disordered regions lie at residues 64-507 and 528-555; these read SGKE…YPTT and NSDF…VTMT. 5 positions are modified to phosphoserine: Ser-93, Ser-99, Ser-100, Ser-129, and Ser-147. Ser-93 is a glycosylation site (O-linked (Xyl...) (chondroitin sulfate) serine). Basic and acidic residues-rich tracts occupy residues 148–161 and 168–248; these read KEAK…RGGK and GKIY…KPQE. Residue Ser-190 is modified to Phosphoserine. O-linked (Xyl...) (chondroitin sulfate) serine glycosylation occurs at Ser-236. Over residues 250–269 the composition is skewed to acidic residues; it reads PDQDQSEEESEEGEEGEEGA. Ser-255, Ser-259, Ser-291, Ser-309, and Ser-333 each carry phosphoserine. Positions 292–311 are enriched in basic and acidic residues; the sequence is YEGRRPLSEERKHAAGESKD. Tyr-339 is subject to Sulfotyrosine. Basic and acidic residues-rich tracts occupy residues 361–410 and 429–452; these read GSEE…EGAK and SRQE…DTAK. Residues Ser-362, Ser-372, Ser-375, and Ser-397 each carry the phosphoserine modification. Tyr-469 carries the sulfotyrosine modification. A phosphoserine mark is found at Ser-490, Ser-529, and Ser-540. The residue at position 563 (Tyr-563) is a Sulfotyrosine. Residues 620–646 form a disordered region; it reads DFYDSEEQMGPHQEAEDEKDRADQRVL. Tyr-622 is modified (sulfotyrosine; partial). At Ser-624 the chain carries Phosphoserine. Residues 637 to 646 show a composition bias toward basic and acidic residues; the sequence is EKDRADQRVL. Arg-674 is modified (arginine amide; in CCB peptide short form).

It belongs to the chromogranin/secretogranin protein family. As to quaternary structure, interacts with ITPR1 in the secretory granules. In terms of processing, extensively processed in glucagonoma tissue by limited proteolysis at conserved basic residues. Alternative processing are seen in different tissues. The proglucagon-converting enzymes present in transformed alpha-cells are likely candidates to be involved in tissue-specific processing. In terms of tissue distribution, expressed in the brain, adrenal medulla and anterior pituitary. In the brain, localized to the hippocampal formation, the endocrine hypothalamus, the olfactory system, and in anatomically distinct structures in the pons-medulla.

Its subcellular location is the secreted. In terms of biological role, secretogranin-1 is a neuroendocrine secretory granule protein, which may be the precursor for other biologically active peptides. In Rattus norvegicus (Rat), this protein is Secretogranin-1 (Chgb).